Here is a 102-residue protein sequence, read N- to C-terminus: Large ribosomal subunit protein bL21 (102 aa).

It belongs to the bacterial ribosomal protein bL21 family. Part of the 50S ribosomal subunit. Contacts protein L20.

Functionally, this protein binds to 23S rRNA in the presence of protein L20. This is Large ribosomal subunit protein bL21 from Photorhabdus laumondii subsp. laumondii (strain DSM 15139 / CIP 105565 / TT01) (Photorhabdus luminescens subsp. laumondii).